Here is a 106-residue protein sequence, read N- to C-terminus: ATP-dependent Clp protease adapter protein ClpS (106 aa).

Belongs to the ClpS family. Binds to the N-terminal domain of the chaperone ClpA.

Its function is as follows. Involved in the modulation of the specificity of the ClpAP-mediated ATP-dependent protein degradation. The sequence is that of ATP-dependent Clp protease adapter protein ClpS from Salmonella gallinarum (strain 287/91 / NCTC 13346).